The primary structure comprises 191 residues: Inosine triphosphate pyrophosphatase (191 aa).

Residue 12-17 (TGNKNK) participates in ITP binding. A Mg(2+)-binding site is contributed by Glu-40. Residues Lys-52, 68-69 (DS), Lys-85, 144-147 (FGWE), Lys-167, and 172-173 (HR) each bind ITP.

Belongs to the HAM1 NTPase family. As to quaternary structure, homodimer. Mg(2+) serves as cofactor. The cofactor is Mn(2+).

It localises to the cytoplasm. The protein resides in the nucleus. The enzyme catalyses ITP + H2O = IMP + diphosphate + H(+). The catalysed reaction is dITP + H2O = dIMP + diphosphate + H(+). It carries out the reaction XTP + H2O = XMP + diphosphate + H(+). Pyrophosphatase that hydrolyzes non-canonical purine nucleotides such as inosine triphosphate (ITP), deoxyinosine triphosphate (dITP) or xanthosine 5'-triphosphate (XTP) to their respective monophosphate derivatives. The enzyme does not distinguish between the deoxy- and ribose forms. Probably excludes non-canonical purines from RNA and DNA precursor pools, thus preventing their incorporation into RNA and DNA and avoiding chromosomal lesions. This Aspergillus oryzae (strain ATCC 42149 / RIB 40) (Yellow koji mold) protein is Inosine triphosphate pyrophosphatase.